The chain runs to 421 residues: F-box protein At2g17690 (421 aa).

The 49-residue stretch at 2 to 50 (GDWSKLPEELLGLIALRLYSVIELIRFRSICKSWRSSASGVNKNHSLSS) folds into the F-box domain.

In terms of biological role, involved in heat stress response. Contributes to recovery from heat stress. The sequence is that of F-box protein At2g17690 from Arabidopsis thaliana (Mouse-ear cress).